Consider the following 400-residue polypeptide: Probable phospho-2-dehydro-3-deoxyheptonate aldolase (400 aa).

Belongs to the class-II DAHP synthase family.

The enzyme catalyses D-erythrose 4-phosphate + phosphoenolpyruvate + H2O = 7-phospho-2-dehydro-3-deoxy-D-arabino-heptonate + phosphate. The protein operates within antibiotic biosynthesis; phenazine biosynthesis. The polypeptide is Probable phospho-2-dehydro-3-deoxyheptonate aldolase (phzC) (Pseudomonas fluorescens).